Here is a 455-residue protein sequence, read N- to C-terminus: Probable ATP-dependent RNA helicase DDX47 (455 aa).

Residues 1 to 21 are disordered; it reads MAADEEPDSPSGALQTAAEEE. Alanine 2 is subject to N-acetylalanine. Residue serine 9 is modified to Phosphoserine. The short motif at 24-52 is the Q motif element; it reads KTFKDLGVTDVLCEACDQLGWAKPTKIQI. The Helicase ATP-binding domain occupies 55-226; it reads IPLALQGRDI…RAALKNPVKC (172 aa). An ATP-binding site is contributed by 68-75; it reads AETGSGKT. Position 149 is a phosphothreonine (threonine 149). The DEAD box signature appears at 174–177; the sequence is DEAD. The region spanning 237–397 is the Helicase C-terminal domain; it reads KLQQYYLFIP…VFPTQDEEVM (161 aa). The tract at residues 412–455 is disordered; that stretch reads MELREHGEKKKRKREDAGDDDDKEGAIGVRNKVAGGKMKKRKGR.

It belongs to the DEAD box helicase family. DDX47/RRP3 subfamily. Interacts with AGO1 and AGO2. Interacts with GABARAP. Interacts with NOL8; the interaction is RNA-dependent.

It is found in the nucleus. The protein resides in the nucleolus. The catalysed reaction is ATP + H2O = ADP + phosphate + H(+). Its function is as follows. Involved in apoptosis. May have a role in rRNA processing and mRNA splicing. Associates with pre-rRNA precursors. The chain is Probable ATP-dependent RNA helicase DDX47 (Ddx47) from Mus musculus (Mouse).